Reading from the N-terminus, the 176-residue chain is Ribosome maturation factor RimP (176 aa).

It belongs to the RimP family.

Its subcellular location is the cytoplasm. In terms of biological role, required for maturation of 30S ribosomal subunits. This chain is Ribosome maturation factor RimP, found in Mycolicibacterium vanbaalenii (strain DSM 7251 / JCM 13017 / BCRC 16820 / KCTC 9966 / NRRL B-24157 / PYR-1) (Mycobacterium vanbaalenii).